The sequence spans 396 residues: Ribosomal RNA large subunit methyltransferase G (396 aa).

Belongs to the methyltransferase superfamily. RlmG family.

The protein localises to the cytoplasm. The enzyme catalyses guanosine(1835) in 23S rRNA + S-adenosyl-L-methionine = N(2)-methylguanosine(1835) in 23S rRNA + S-adenosyl-L-homocysteine + H(+). In terms of biological role, specifically methylates the guanine in position 1835 (m2G1835) of 23S rRNA. This is Ribosomal RNA large subunit methyltransferase G from Yersinia enterocolitica serotype O:8 / biotype 1B (strain NCTC 13174 / 8081).